The following is a 270-amino-acid chain: MSGKANTSKKKSQRVKRNVKQRADKEDEELDSPENKVGNRAKRNRSHAGHLSSKEQTKCVHLKRVKISSNKRTAWQPLPKNTEEYLQSMMDSAILGILNKNIKRKEQIQYHLDQLKKRFLQQCATLKVPPGKLNYLRDMSKLLKVEREQERANEESLASLQEEIDKIVETTESMTENIESLKTKIEILTNEVEKEEEEMKEVFHIDSNKVLALPELSQKSLKAPILQKEILTLIPNQNALLKDLDVLQNSAPGKNMAAFIQEAYMKLNGS.

Residues Met1 to Cys59 form a disordered region. 2 stretches are compositionally biased toward basic residues: residues Thr7–Lys20 and Asn39–Ala48. Ser52 is modified (phosphoserine). Positions Leu143–Ile205 form a coiled coil.

The protein belongs to the CENP-Q/OKP1 family. As to quaternary structure, component of the CENPA-CAD complex, composed of CENPI, CENPK, CENPL, CENPO, CENPP, CENPQ, CENPR and CENPS. The CENPA-CAD complex interacts with the CENPA-NAC complex, at least composed of CENPA, CENPC, CENPH, CENPM, CENPN, CENPT and CENPU. Phosphorylation at Ser-52 is essential for CENPE recruitment to kinetochores and orderly chromosome congression.

It is found in the nucleus. It localises to the chromosome. The protein resides in the centromere. Its function is as follows. Component of the CENPA-CAD (nucleosome distal) complex, a complex recruited to centromeres which is involved in assembly of kinetochore proteins, mitotic progression and chromosome segregation. May be involved in incorporation of newly synthesized CENPA into centromeres via its interaction with the CENPA-NAC complex. Plays an important role in chromosome congression and in the recruitment of CENP-O complex (which comprises CENPO, CENPP, CENPQ and CENPU), CENPE and PLK1 to the kinetochores. This Rattus norvegicus (Rat) protein is Centromere protein Q (Cenpq).